The chain runs to 183 residues: Myelin-associated oligodendrocyte basic protein (183 aa).

A disordered region spans residues 68–183 (TRTSRRAKSP…GSPVKASRFW (116 aa)). Residues 69–78 (RTSRRAKSPQ) show a composition bias toward basic residues. Over residues 79-96 (RPKQQPAAPPAVVRAPAK) the composition is skewed to low complexity. 4 repeat units span residues 97–106 (PRSPPRSERQ), 107–116 (PRSPPRSERQ), 117–126 (PRSPPRSERQ), and 127–136 (PRSPPRSERQ). Positions 97-136 (PRSPPRSERQPRSPPRSERQPRSPPRSERQPRSPPRSERQ) are 4 X 10 AA tandem repeats of P-R-S-P-P-R-S-E-R-Q. Residues Ser99 and Ser109 each carry the phosphoserine modification. A compositionally biased stretch (basic and acidic residues) spans 101-143 (PRSERQPRSPPRSERQPRSPPRSERQPRSPPRSERQPRPRPEV). The segment covering 151–164 (RPPQKSKQQPRSSP) has biased composition (low complexity).

The protein localises to the cytoplasm. The protein resides in the perinuclear region. Its function is as follows. May play a role in compacting or stabilizing the myelin sheath, possibly by binding the negatively charged acidic phospholipids of the cytoplasmic membrane. The protein is Myelin-associated oligodendrocyte basic protein (MOBP) of Homo sapiens (Human).